Reading from the N-terminus, the 225-residue chain is uncharacterized protein (225 aa).

The 49-residue stretch at 166 to 214 (LNSDVIKDKILAIIENVGEITYEELAEKINIPEEDLEKYLSELKESGDI) folds into the PCI domain.

This is an uncharacterized protein from Methanocaldococcus jannaschii (strain ATCC 43067 / DSM 2661 / JAL-1 / JCM 10045 / NBRC 100440) (Methanococcus jannaschii).